Reading from the N-terminus, the 187-residue chain is Dirigent protein 23 (187 aa).

Residues 1-24 form the signal peptide; the sequence is MAKEEYVSRMLVMLIMIMPLVAQG. Residue Asn-182 is glycosylated (N-linked (GlcNAc...) asparagine).

It belongs to the plant dirigent protein family. Homodimer.

Its subcellular location is the secreted. The protein resides in the extracellular space. The protein localises to the apoplast. Its function is as follows. Dirigent proteins impart stereoselectivity on the phenoxy radical-coupling reaction, yielding optically active lignans from two molecules of coniferyl alcohol in the biosynthesis of lignans, flavonolignans, and alkaloids and thus plays a central role in plant secondary metabolism. This chain is Dirigent protein 23 (DIR23), found in Arabidopsis thaliana (Mouse-ear cress).